The following is an 897-amino-acid chain: Mating-type protein ALPHA3 (897 aa).

Its function is as follows. Mating type proteins are sequence specific DNA-binding proteins that act as master switches in yeast differentiation by controlling gene expression in a cell type-specific fashion. Required for efficient mating as an alpha-cell. This chain is Mating-type protein ALPHA3 (HMLALPHA3), found in Kluyveromyces lactis (strain ATCC 8585 / CBS 2359 / DSM 70799 / NBRC 1267 / NRRL Y-1140 / WM37) (Yeast).